The sequence spans 364 residues: Cobalt-precorrin-5B C(1)-methyltransferase (364 aa).

It belongs to the CbiD family.

The enzyme catalyses Co-precorrin-5B + S-adenosyl-L-methionine = Co-precorrin-6A + S-adenosyl-L-homocysteine. The protein operates within cofactor biosynthesis; adenosylcobalamin biosynthesis; cob(II)yrinate a,c-diamide from sirohydrochlorin (anaerobic route): step 6/10. Functionally, catalyzes the methylation of C-1 in cobalt-precorrin-5B to form cobalt-precorrin-6A. This chain is Cobalt-precorrin-5B C(1)-methyltransferase, found in Pseudomonas putida (strain ATCC 700007 / DSM 6899 / JCM 31910 / BCRC 17059 / LMG 24140 / F1).